The primary structure comprises 350 residues: MAMRQTPLTCSGHTRPVVDLAFSGITPYGYFLISACKDGKPMLRQGDTGDWIGTFLGHKGAVWGATLNKDATKAATAAADFTAKVWDAVSGDELMTLAHKHIVKTVDFTQDSNYLLTGGQDKLLRIYDLNKPEAEPKEISGHTSGIKKALWCSEDKQILSADDKTVRLWDHATMTEVKSLNFNMSVSSMEYIPEGEILVITYGRSIAFHSAVSLDPIKSFEAPATINSASLHPEKEFLVAGGEDFKLYKYDYNSGEELESYKGHFGPIHCVRFSPDGELYASGSEDGTLRLWQTVVGKTYGLWKCVLPEEDSGELAKPKIGFPETTEEELEEIASENSDCIFPSAPDVKA.

7 WD repeats span residues 12-56, 57-96, 98-137, 141-179, 180-212, 221-262, and 263-302; these read GHTR…GTFL, GHKG…ELMT, AHKH…AEPK, GHTS…EVKS, LNFN…HSAV, EAPA…ESYK, and GHFG…TYGL. Residues Ser312, Ser335, and Ser338 each carry the phosphoserine modification.

Belongs to the WD repeat STRAP family. Part of the core SMN complex that contains SMN1, GEMIN2/SIP1, DDX20/GEMIN3, GEMIN4, GEMIN5, GEMIN6, GEMIN7, GEMIN8 and STRAP/UNRIP. Part of the SMN-Sm complex that contains SMN1, GEMIN2/SIP1, DDX20/GEMIN3, GEMIN4, GEMIN5, GEMIN6, GEMIN7, GEMIN8, STRAP/UNRIP and the Sm proteins SNRPB, SNRPD1, SNRPD2, SNRPD3, SNRPE, SNRPF and SNRPG. Associates with the SMN complex in the cytoplasm but not in the nucleus. Interacts with GEMIN6; the interaction is direct. Interacts with GEMIN7; the interaction is direct. Interacts with CSDE1/UNR and MAWBP. Interacts with PDPK1. Interacts with TRIM48.

Its subcellular location is the cytoplasm. The protein resides in the nucleus. Functionally, the SMN complex catalyzes the assembly of small nuclear ribonucleoproteins (snRNPs), the building blocks of the spliceosome, and thereby plays an important role in the splicing of cellular pre-mRNAs. Most spliceosomal snRNPs contain a common set of Sm proteins SNRPB, SNRPD1, SNRPD2, SNRPD3, SNRPE, SNRPF and SNRPG that assemble in a heptameric protein ring on the Sm site of the small nuclear RNA to form the core snRNP (Sm core). In the cytosol, the Sm proteins SNRPD1, SNRPD2, SNRPE, SNRPF and SNRPG are trapped in an inactive 6S pICln-Sm complex by the chaperone CLNS1A that controls the assembly of the core snRNP. To assemble core snRNPs, the SMN complex accepts the trapped 5Sm proteins from CLNS1A forming an intermediate. Binding of snRNA inside 5Sm triggers eviction of the SMN complex, thereby allowing binding of SNRPD3 and SNRPB to complete assembly of the core snRNP. STRAP plays a role in the cellular distribution of the SMN complex. Negatively regulates TGF-beta signaling but positively regulates the PDPK1 kinase activity by enhancing its autophosphorylation and by significantly reducing the association of PDPK1 with 14-3-3 protein. The protein is Serine-threonine kinase receptor-associated protein (STRAP) of Homo sapiens (Human).